Reading from the N-terminus, the 124-residue chain is UPF0337 protein blr1496 (124 aa).

The protein belongs to the UPF0337 (CsbD) family.

The polypeptide is UPF0337 protein blr1496 (Bradyrhizobium diazoefficiens (strain JCM 10833 / BCRC 13528 / IAM 13628 / NBRC 14792 / USDA 110)).